A 254-amino-acid polypeptide reads, in one-letter code: Ribose-5-phosphate isomerase A (254 aa).

Substrate contacts are provided by residues 45-48, 105-108, and 118-121; these read TGST, DGAD, and KGGG. E127 functions as the Proton acceptor in the catalytic mechanism. K145 lines the substrate pocket.

Belongs to the ribose 5-phosphate isomerase family. Homodimer.

The enzyme catalyses aldehydo-D-ribose 5-phosphate = D-ribulose 5-phosphate. Its pathway is carbohydrate degradation; pentose phosphate pathway; D-ribose 5-phosphate from D-ribulose 5-phosphate (non-oxidative stage): step 1/1. Catalyzes the reversible conversion of ribose-5-phosphate to ribulose 5-phosphate. The chain is Ribose-5-phosphate isomerase A from Treponema pallidum subsp. pallidum (strain SS14).